We begin with the raw amino-acid sequence, 55 residues long: Spermatid nuclear transition protein 1 (55 aa).

Residues 1 to 42 are compositionally biased toward basic residues; the sequence is MSTSRKLKSQGMRRGKNRTPHKGVKRSGSKRKYRKSSLKSRK. The segment at 1-55 is disordered; the sequence is MSTSRKLKSQGMRRGKNRTPHKGVKRSGSKRKYRKSSLKSRKRCDDANRNLRSHL. Residues S9, S36, S37, and S40 each carry the phosphoserine modification.

The protein belongs to the nuclear transition protein 1 family. In terms of tissue distribution, testis.

The protein localises to the nucleus. Its subcellular location is the chromosome. In terms of biological role, plays a key role in the replacement of histones to protamine in the elongating spermatids of mammals. In condensing spermatids, loaded onto the nucleosomes, where it promotes the recruitment and processing of protamines, which are responsible for histone eviction. This chain is Spermatid nuclear transition protein 1 (TNP1), found in Bos taurus (Bovine).